The sequence spans 3814 residues: Hybrid PKS-NRPS synthetase pyvA (3814 aa).

In terms of domain architecture, Ketosynthase family 3 (KS3) spans 1 to 340 (MDPQQRLLLE…GSNAHVILES (340 aa)). Active-site for beta-ketoacyl synthase activity residues include Cys-87, His-222, and His-261. A malonyl-CoA:ACP transacylase (MAT) domain region spans residues 441–758 (VFTGQGAQWH…PYFASLSRGV (318 aa)). Ser-533 acts as the For malonyltransferase activity in catalysis. The N-terminal hotdog fold stretch occupies residues 835–970 (HPILGAKMPG…GLISISTATT (136 aa)). The tract at residues 835 to 1149 (HPILGAKMPG…LRLTSLSNGR (315 aa)) is dehydratase (DH) domain. A PKS/mFAS DH domain is found at 835–1151 (HPILGAKMPG…LTSLSNGRAA (317 aa)). His-867 (proton acceptor; for dehydratase activity) is an active-site residue. Residues 970 to 993 (TADGAPSRKPYRQHPQPQPGRMST) are disordered. The tract at residues 991–1151 (MSTASFPAQS…LTSLSNGRAA (161 aa)) is C-terminal hotdog fold. Asp-1057 functions as the Proton donor; for dehydratase activity in the catalytic mechanism. The interval 1520–1836 (GLLETLVWED…MGRHTGKVVL (317 aa)) is enoyl reductase (ER) domain. The tract at residues 1864 to 2036 (TYLLVGGLGG…PASSMNCGRI (173 aa)) is ketoreductase (KR) domain. Residues 2141-2220 (IDLSDRVALL…ALVEKAIGLF (80 aa)) enclose the Carrier 1 domain. The residue at position 2180 (Ser-2180) is an O-(pantetheine 4'-phosphoryl)serine. Residues 2228–2238 (QQQQQSVQSSS) are compositionally biased toward low complexity. Positions 2228–2270 (QQQQQSVQSSSAPSNDDQSPTFNKNLDSQDPSTSLQIPKADCS) are disordered. Residues 2239–2263 (APSNDDQSPTFNKNLDSQDPSTSLQ) show a composition bias toward polar residues. A condensation (C) domain 7 region spans residues 2273-2718 (LPMSTFQNRL…PEVRLAGTLE (446 aa)). An adenylation (A) domain 8 region spans residues 2738 to 3149 (PLNLPRRIVE…DGQLEFLGRI (412 aa)). The interval 3257-3304 (SGKTDRRALGASQAPGTPPQHGAGPAAASTLDPAQAQAQDRADEEVGD) is disordered. In terms of domain architecture, Carrier 2 spans 3304-3379 (DRTMATVTRV…QLVELVHSKV (76 aa)). The residue at position 3339 (Ser-3339) is an O-(pantetheine 4'-phosphoryl)serine. The segment at 3428–3680 (MTGAESFTGI…VDLVPVNYLT (253 aa)) is thioesterase (TE) domain.

The protein in the C-terminal section; belongs to the NRP synthetase family.

It functions in the pathway secondary metabolite biosynthesis. Functionally, hybrid PKS-NRPS synthetase; part of the gene cluster that mediates the biosynthesis of pyranoviolin A, a pyranonigrin analog with a C-3 methoxy group. Initially, the PKS portion of pyvA synthesizes C-10 carbon chain from 5 molecules of malonyl-CoA, which is then condensed with the thiolation (T) domain-bound glycine activated by the adenylation (A) domain. The subsequent chain release by Dieckmann condensation (DKC) could be catalyzed by the TE domain present at the C-terminus of pyvA and/or the alpha/beta hydrolase pyvD, installing the tetramic acid moiety. The FAD-dependent monooxygenase pyvC next epoxidizes one of the olefins of the polyketide part, and the epoxide ring-opening induces the dihydro-gamma-pyrone ring formation. The cytochrome P450 monooxygeanse pyvB would be responsible for the 2 consecutive reactions, in which the dihydro-gamma-pyrone is oxidized to gamma-pyrone and C-7 is hydroxylated to yield pyranonigrin F. Finally, the O-methyltransferase pyvH methylates the C-3 hydroxy group to complete the biosynthesis. This is Hybrid PKS-NRPS synthetase pyvA from Aspergillus violaceofuscus (strain CBS 115571).